A 322-amino-acid chain; its full sequence is Uridylate-specific endoribonuclease EndoU (322 aa).

A helical transmembrane segment spans residues 25–45 (FVIVGLLITIGILSWHFYEYF). Positions 53 to 322 (TPDDVLTLSK…LIGTVYPDSS (270 aa)) constitute an EndoU domain. Active-site residues include histidine 200, histidine 215, and lysine 259.

The protein belongs to the ENDOU family. Monomer. It depends on Mn(2+) as a cofactor. Predominantly expressed in head.

Its subcellular location is the membrane. It catalyses the reaction a ribonucleotidyl-ribonucleotide-RNA = a 3'-end 2',3'-cyclophospho-ribonucleotide-RNA + a 5'-end dephospho-ribonucleoside-RNA. Its function is as follows. Endoribonuclease that cleaves single-stranded RNAs at uridylates and releases products that have 2'-3'-cyclic phosphate termini. Preferentially cleaves single stranded RNA at poly-U sites with CU, UC and AU sites cleaved less efficiently. May target mRNAs encoding proteins involved in lipid metabolism to regulate their expression. Regulates levels of TBPH protein, but not mRNA, by an as yet unknown mechanism. Important for neuronal development or function. The chain is Uridylate-specific endoribonuclease EndoU from Drosophila melanogaster (Fruit fly).